The primary structure comprises 273 residues: MAKHLYKTPIPSTRKGTVDRQVKSNPRNKLIHGRHRCGKGRNARGIITARHRGGGHKRLYRKIDFRRNQKDISGRIVTIEYDPNRNAYICLIHYGDGEKRYILHPRGAIIGDTIVSGTKVPISMGNALPLTDMPLGTAIHNIEITRGRGGQLARAAGAVAKLIAKEGKLATLRLPSGEVRLVSQNCLATVGQVGNVGVNQKSLGRAGSKCWLGKRPVVRGVVMNPVDHPHGGGEGKAPIGRKKPTTPWGYPALGRRTRKRKKYSDSFILRRRK.

2 disordered regions span residues 1-22 (MAKH…DRQV) and 225-273 (PVDH…RRRK).

This sequence belongs to the universal ribosomal protein uL2 family. As to quaternary structure, part of the 50S ribosomal subunit.

The protein localises to the plastid. It localises to the chloroplast. The chain is Large ribosomal subunit protein uL2cz/uL2cy (rpl2-A) from Saccharum hybrid (Sugarcane).